The following is a 390-amino-acid chain: Chorismate synthase (390 aa).

The NADP(+) site is built by R48 and R54. Residues 125–127 (RSS), 238–239 (NA), G278, 293–297 (KPTSS), and R319 each bind FMN. The interval 359–390 (PRIPGSTTNQIHPVEMQASAPRAEDPEPDESS) is disordered.

Belongs to the chorismate synthase family. Homotetramer. It depends on FMNH2 as a cofactor.

The catalysed reaction is 5-O-(1-carboxyvinyl)-3-phosphoshikimate = chorismate + phosphate. Its pathway is metabolic intermediate biosynthesis; chorismate biosynthesis; chorismate from D-erythrose 4-phosphate and phosphoenolpyruvate: step 7/7. Functionally, catalyzes the anti-1,4-elimination of the C-3 phosphate and the C-6 proR hydrogen from 5-enolpyruvylshikimate-3-phosphate (EPSP) to yield chorismate, which is the branch point compound that serves as the starting substrate for the three terminal pathways of aromatic amino acid biosynthesis. This reaction introduces a second double bond into the aromatic ring system. The polypeptide is Chorismate synthase (Nitrosomonas europaea (strain ATCC 19718 / CIP 103999 / KCTC 2705 / NBRC 14298)).